The chain runs to 555 residues: NADH-ubiquinone oxidoreductase chain 5 (555 aa).

15 helical membrane passes run 37-57, 69-89, 90-110, 133-153, 155-175, 197-217, 230-250, 257-275, 287-307, 323-343, 366-388, 406-426, 454-474, 494-516, and 534-554; these read LAMT…LYAI, FYII…SDNY, IMMF…ISFW, FFML…FDTL, LAAP…LLLA, TPVS…YVLV, LIGI…IAIV, VIAL…AIGI, CHAF…HSYI, LPFS…IPGL, ILYY…VLYL, ENIR…FIGF, WYIK…LVYI, IYYD…GYLN, and RALT…FFFY.

The protein belongs to the complex I subunit 5 family.

It localises to the mitochondrion inner membrane. It catalyses the reaction a ubiquinone + NADH + 5 H(+)(in) = a ubiquinol + NAD(+) + 4 H(+)(out). Core subunit of the mitochondrial membrane respiratory chain NADH dehydrogenase (Complex I) that is believed to belong to the minimal assembly required for catalysis. Complex I functions in the transfer of electrons from NADH to the respiratory chain. The immediate electron acceptor for the enzyme is believed to be ubiquinone. The chain is NADH-ubiquinone oxidoreductase chain 5 (ND5) from Candida parapsilosis (Yeast).